We begin with the raw amino-acid sequence, 384 residues long: Chaperone protein DnaJ (384 aa).

In terms of domain architecture, J spans 5–70 (DYYEVLGVAR…QKKAAYDRFG (66 aa)). A CR-type zinc finger spans residues 138-216 (GAQKTINVPG…CRGAGRVQKE (79 aa)). Cys-151, Cys-154, Cys-168, Cys-171, Cys-190, Cys-193, Cys-204, and Cys-207 together coordinate Zn(2+). CXXCXGXG motif repeat units follow at residues 151–158 (CAACNGTG), 168–175 (CPTCSGMG), 190–197 (CPTCSGHG), and 204–211 (CQECRGAG). Positions 300–322 (KVPPGTQSGKQLRLRGKGMPPLR) are disordered.

The protein belongs to the DnaJ family. As to quaternary structure, homodimer. Zn(2+) is required as a cofactor.

It is found in the cytoplasm. In terms of biological role, participates actively in the response to hyperosmotic and heat shock by preventing the aggregation of stress-denatured proteins and by disaggregating proteins, also in an autonomous, DnaK-independent fashion. Unfolded proteins bind initially to DnaJ; upon interaction with the DnaJ-bound protein, DnaK hydrolyzes its bound ATP, resulting in the formation of a stable complex. GrpE releases ADP from DnaK; ATP binding to DnaK triggers the release of the substrate protein, thus completing the reaction cycle. Several rounds of ATP-dependent interactions between DnaJ, DnaK and GrpE are required for fully efficient folding. Also involved, together with DnaK and GrpE, in the DNA replication of plasmids through activation of initiation proteins. The chain is Chaperone protein DnaJ from Paracoccus denitrificans (strain Pd 1222).